Consider the following 86-residue polypeptide: Alpha-toxin TbTx5 (86 aa).

A signal peptide spans 1-19 (MNDFVFLVVACLLTAGTEG). The LCN-type CS-alpha/beta domain occupies 21–82 (KDGYPVEGDN…EPTKTNGRCK (62 aa)). Cystine bridges form between C31–C81, C35–C57, C43–C64, and C47–C66. At P83 the chain carries Proline amide.

It belongs to the long (4 C-C) scorpion toxin superfamily. Sodium channel inhibitor family. Alpha subfamily. Expressed by the venom gland.

It is found in the secreted. Its function is as follows. Alpha toxins bind voltage-independently at site-3 of sodium channels (Nav) and inhibit the inactivation of the activated channels, thereby blocking neuronal transmission. The protein is Alpha-toxin TbTx5 of Tityus bahiensis (Brazilian scorpion).